A 125-amino-acid chain; its full sequence is Large ribosomal subunit protein bL12 (125 aa).

Belongs to the bacterial ribosomal protein bL12 family. As to quaternary structure, homodimer. Part of the ribosomal stalk of the 50S ribosomal subunit. Forms a multimeric L10(L12)X complex, where L10 forms an elongated spine to which 2 to 4 L12 dimers bind in a sequential fashion. Binds GTP-bound translation factors.

Functionally, forms part of the ribosomal stalk which helps the ribosome interact with GTP-bound translation factors. Is thus essential for accurate translation. In Rickettsia conorii (strain ATCC VR-613 / Malish 7), this protein is Large ribosomal subunit protein bL12.